A 959-amino-acid chain; its full sequence is Probable transport protein MmpL4 (959 aa).

11 helical membrane passes run 25–45 (FAVP…VFIP), 205–225 (VIVI…VILL), 239–259 (VVAL…VNLL), 300–320 (FHVI…LSFA), 333–353 (AVGM…VLTV), 381–401 (WPLP…LALP), 766–786 (WDLV…MLII), 790–810 (FVAA…SFGL), 818–838 (ILGI…LLAV), 872–892 (VVTN…VSDL), and 902–922 (IGLG…PSIA).

The protein belongs to the resistance-nodulation-cell division (RND) (TC 2.A.6) family. MmpL subfamily.

It localises to the cell membrane. The polypeptide is Probable transport protein MmpL4 (mmpL4) (Mycobacterium leprae (strain TN)).